Consider the following 444-residue polypeptide: MAEFFPEIPKIQFEGKESTNPLAFRFYDPNEVIDGKPLKDHLKFSVAFWHTFVNEGRDPFGDPTAERPWNRFSDPMDKAFARVDALFEFCEKLNIEYFCFHDRDIAPEGKTLRETNKILDKVVERIKERMKDSNVKLLWGTANLFSHPRYMHGAATTCSADVFAYAAAQVKKALEITKELGGEGYVFWGGREGYETLLNTDLGLELENLARFLRMAVEYAKKIGFTGQFLIEPKPKEPTKHQYDFDVATAYAFLKNHGLDEYFKFNIEANHATLAGHTFQHELRMARILGKLGSIDANQGDLLLGWDTDQFPTNIYDTTLAMYEVIKAGGFTKGGLNFDAKVRRASYKVEDLFIGHIAGMDTFALGFKIAYKLAKDGVFDKFIEEKYRSFKEGIGKEIVEGKTDFEKLEEYIIDKEDIELPSGKQEYLESLLNSYIVKTIAELR.

Residues H101 and D104 contribute to the active site. Residues E232, E268, H271, D296, D307, D309, and D339 each coordinate Mg(2+).

It belongs to the xylose isomerase family. Homotetramer. Mg(2+) serves as cofactor.

It is found in the cytoplasm. It carries out the reaction alpha-D-xylose = alpha-D-xylulofuranose. The chain is Xylose isomerase from Thermotoga maritima (strain ATCC 43589 / DSM 3109 / JCM 10099 / NBRC 100826 / MSB8).